The following is a 317-amino-acid chain: Malate dehydrogenase (317 aa).

NAD(+)-binding positions include 10 to 15 and D34; that span reads GGGQIG. The substrate site is built by R83 and R89. Residues N96 and 119 to 121 each bind NAD(+); that span reads ISN. Residues N121 and R152 each coordinate substrate. The active-site Proton acceptor is H176.

This sequence belongs to the LDH/MDH superfamily. MDH type 3 family.

The enzyme catalyses (S)-malate + NAD(+) = oxaloacetate + NADH + H(+). Catalyzes the reversible oxidation of malate to oxaloacetate. The polypeptide is Malate dehydrogenase (Geobacter sulfurreducens (strain ATCC 51573 / DSM 12127 / PCA)).